A 370-amino-acid polypeptide reads, in one-letter code: MNPKPEADRKLSVVVAGGGTAGHIEPAMAVAEAVRAQRPDARITALGTTRGLETTLVPARGFDLQLIPPVPVPRKLNKDLATLPLRLRKALKETKRVLREVEADVVIGFGGYVSAPAYLAARSLKIPFFVHEANARAGVANKLGVKLGGTGLAAVEDSGLEAEIVGIPVRESVLQLDRKALRAEAREFFGVDPEAPLLLVTGGSQGARSINNAVVDAAKTLQDAGIGVLHAYGKKNDIELPAEVQEGKPRYVAVPYIERMDLALAAADAILCRSGAMTVAEVSAVGLPGIYVPLPHGNGEQELNVRPITHAGGGVIIKDAELTGHRVSQEVIPLLRDETRWQAASLATLAAGHRDAAEKIAEKIIAAADA.

Residues 20-22 (TAG), N134, R170, S204, I257, and Q301 contribute to the UDP-N-acetyl-alpha-D-glucosamine site.

Belongs to the glycosyltransferase 28 family. MurG subfamily.

The protein localises to the cell membrane. The catalysed reaction is di-trans,octa-cis-undecaprenyl diphospho-N-acetyl-alpha-D-muramoyl-L-alanyl-D-glutamyl-meso-2,6-diaminopimeloyl-D-alanyl-D-alanine + UDP-N-acetyl-alpha-D-glucosamine = di-trans,octa-cis-undecaprenyl diphospho-[N-acetyl-alpha-D-glucosaminyl-(1-&gt;4)]-N-acetyl-alpha-D-muramoyl-L-alanyl-D-glutamyl-meso-2,6-diaminopimeloyl-D-alanyl-D-alanine + UDP + H(+). It functions in the pathway cell wall biogenesis; peptidoglycan biosynthesis. Cell wall formation. Catalyzes the transfer of a GlcNAc subunit on undecaprenyl-pyrophosphoryl-MurNAc-pentapeptide (lipid intermediate I) to form undecaprenyl-pyrophosphoryl-MurNAc-(pentapeptide)GlcNAc (lipid intermediate II). The chain is UDP-N-acetylglucosamine--N-acetylmuramyl-(pentapeptide) pyrophosphoryl-undecaprenol N-acetylglucosamine transferase from Corynebacterium jeikeium (strain K411).